The primary structure comprises 661 residues: Transketolase (661 aa).

H28 is a substrate binding site. Residues H68 and 116 to 118 (GPL) contribute to the thiamine diphosphate site. E157 lines the Mg(2+) pocket. Thiamine diphosphate is bound by residues G158 and N187. Residues N187 and I189 each contribute to the Mg(2+) site. Residues H261 and R358 each coordinate substrate. H261 contacts thiamine diphosphate. E412 (proton donor) is an active-site residue. A thiamine diphosphate-binding site is contributed by F438. Substrate is bound by residues H462, D470, and R521.

The protein belongs to the transketolase family. In terms of assembly, homodimer. It depends on Mg(2+) as a cofactor. The cofactor is Ca(2+). Mn(2+) serves as cofactor. Requires Co(2+) as cofactor. Thiamine diphosphate is required as a cofactor.

The catalysed reaction is D-sedoheptulose 7-phosphate + D-glyceraldehyde 3-phosphate = aldehydo-D-ribose 5-phosphate + D-xylulose 5-phosphate. In terms of biological role, catalyzes the transfer of a two-carbon ketol group from a ketose donor to an aldose acceptor, via a covalent intermediate with the cofactor thiamine pyrophosphate. This Treponema pallidum (strain Nichols) protein is Transketolase (tkt).